Here is a 161-residue protein sequence, read N- to C-terminus: MALHRDDICDRIRTLALPVIDSMNLELVEVEYKRSGREAVLRLFIDKEGGVTLDDCADLSRELSTLLDVEDLIPCEYSLEVSSPGLDRPLKSEADYERFSGRLIKVRTYEPYQDDAGNRRKTFLGRLEGLKDGSVVMSLTEGQTASIPLERIAKAQLEFEF.

The protein belongs to the RimP family.

The protein resides in the cytoplasm. Functionally, required for maturation of 30S ribosomal subunits. The polypeptide is Ribosome maturation factor RimP (Pelobacter propionicus (strain DSM 2379 / NBRC 103807 / OttBd1)).